The primary structure comprises 540 residues: CTP synthase (540 aa).

Residues 1–265 (MVRFIFITGG…DNKVLKFFNL (265 aa)) form an amidoligase domain region. S13 lines the CTP pocket. S13 provides a ligand contact to UTP. ATP-binding positions include 14-19 (SLGKGL) and D71. Positions 71 and 139 each coordinate Mg(2+). Residues 146–148 (DIE), 186–191 (KTKPTQ), and K222 each bind CTP. Residues 186-191 (KTKPTQ) and K222 each bind UTP. Residues 290–539 (RIAIIAKYHK…VEAAIKYNKN (250 aa)) form the Glutamine amidotransferase type-1 domain. G352 is an L-glutamine binding site. The active-site Nucleophile; for glutamine hydrolysis is C379. L-glutamine is bound by residues 380-383 (LGMQ), E403, and R467. Active-site residues include H512 and E514.

Belongs to the CTP synthase family. In terms of assembly, homotetramer.

It carries out the reaction UTP + L-glutamine + ATP + H2O = CTP + L-glutamate + ADP + phosphate + 2 H(+). The enzyme catalyses L-glutamine + H2O = L-glutamate + NH4(+). It catalyses the reaction UTP + NH4(+) + ATP = CTP + ADP + phosphate + 2 H(+). It functions in the pathway pyrimidine metabolism; CTP biosynthesis via de novo pathway; CTP from UDP: step 2/2. Allosterically activated by GTP, when glutamine is the substrate; GTP has no effect on the reaction when ammonia is the substrate. The allosteric effector GTP functions by stabilizing the protein conformation that binds the tetrahedral intermediate(s) formed during glutamine hydrolysis. Inhibited by the product CTP, via allosteric rather than competitive inhibition. In terms of biological role, catalyzes the ATP-dependent amination of UTP to CTP with either L-glutamine or ammonia as the source of nitrogen. Regulates intracellular CTP levels through interactions with the four ribonucleotide triphosphates. The protein is CTP synthase of Rickettsia bellii (strain RML369-C).